Here is a 377-residue protein sequence, read N- to C-terminus: Alternative oxidase, mitochondrial (377 aa).

The helical transmembrane segment at 149–169 (LSRFIFLESIAAVPGMVAGML) threads the bilayer. Fe cation-binding residues include E156, E195, and H198. A helical transmembrane segment spans residues 214 to 234 (ILIIGAQGVYFNAMFVAYLIS). Fe cation contacts are provided by E246, E303, and H306.

Belongs to the alternative oxidase family. It depends on Fe cation as a cofactor.

Its subcellular location is the mitochondrion inner membrane. Catalyzes cyanide-resistant oxygen consumption. May increase respiration when the cytochrome respiratory pathway is restricted, or in response to low temperatures. The protein is Alternative oxidase, mitochondrial (AOX1) of Pyricularia oryzae (strain 70-15 / ATCC MYA-4617 / FGSC 8958) (Rice blast fungus).